The following is a 496-amino-acid chain: Glycerol kinase (496 aa).

T11 is a binding site for ADP. The ATP site is built by T11, S12, and S13. A sn-glycerol 3-phosphate-binding site is contributed by T11. R15 contacts ADP. The sn-glycerol 3-phosphate site is built by R81, E82, Y133, and D242. R81, E82, Y133, D242, and Q243 together coordinate glycerol. 2 residues coordinate ADP: T264 and G307. T264, G307, Q311, and G412 together coordinate ATP. Positions 412 and 416 each coordinate ADP.

The protein belongs to the FGGY kinase family.

It carries out the reaction glycerol + ATP = sn-glycerol 3-phosphate + ADP + H(+). Its pathway is polyol metabolism; glycerol degradation via glycerol kinase pathway; sn-glycerol 3-phosphate from glycerol: step 1/1. With respect to regulation, inhibited by fructose 1,6-bisphosphate (FBP). Functionally, key enzyme in the regulation of glycerol uptake and metabolism. Catalyzes the phosphorylation of glycerol to yield sn-glycerol 3-phosphate. This is Glycerol kinase from Albidiferax ferrireducens (strain ATCC BAA-621 / DSM 15236 / T118) (Rhodoferax ferrireducens).